The following is a 332-amino-acid chain: Holliday junction branch migration complex subunit RuvB (332 aa).

The interval 1-181 (MARILDNNVM…FGITGHMEYY (181 aa)) is large ATPase domain (RuvB-L). ATP-binding positions include Leu-20, Arg-21, Gly-62, Lys-65, Thr-66, Thr-67, 128–130 (EDF), Arg-171, Tyr-181, and Arg-218. Thr-66 contacts Mg(2+). A small ATPAse domain (RuvB-S) region spans residues 182–252 (QEKDLTEIVE…ITDRALTMLD (71 aa)). Residues 255 to 332 (REGLNYIDQK…RHLGYPYQNT (78 aa)) are head domain (RuvB-H). DNA-binding residues include Arg-291, Arg-310, Arg-312, and Arg-315.

The protein belongs to the RuvB family. In terms of assembly, homohexamer. Forms an RuvA(8)-RuvB(12)-Holliday junction (HJ) complex. HJ DNA is sandwiched between 2 RuvA tetramers; dsDNA enters through RuvA and exits via RuvB. An RuvB hexamer assembles on each DNA strand where it exits the tetramer. Each RuvB hexamer is contacted by two RuvA subunits (via domain III) on 2 adjacent RuvB subunits; this complex drives branch migration. In the full resolvosome a probable DNA-RuvA(4)-RuvB(12)-RuvC(2) complex forms which resolves the HJ.

The protein localises to the cytoplasm. The enzyme catalyses ATP + H2O = ADP + phosphate + H(+). The RuvA-RuvB-RuvC complex processes Holliday junction (HJ) DNA during genetic recombination and DNA repair, while the RuvA-RuvB complex plays an important role in the rescue of blocked DNA replication forks via replication fork reversal (RFR). RuvA specifically binds to HJ cruciform DNA, conferring on it an open structure. The RuvB hexamer acts as an ATP-dependent pump, pulling dsDNA into and through the RuvAB complex. RuvB forms 2 homohexamers on either side of HJ DNA bound by 1 or 2 RuvA tetramers; 4 subunits per hexamer contact DNA at a time. Coordinated motions by a converter formed by DNA-disengaged RuvB subunits stimulates ATP hydrolysis and nucleotide exchange. Immobilization of the converter enables RuvB to convert the ATP-contained energy into a lever motion, pulling 2 nucleotides of DNA out of the RuvA tetramer per ATP hydrolyzed, thus driving DNA branch migration. The RuvB motors rotate together with the DNA substrate, which together with the progressing nucleotide cycle form the mechanistic basis for DNA recombination by continuous HJ branch migration. Branch migration allows RuvC to scan DNA until it finds its consensus sequence, where it cleaves and resolves cruciform DNA. This Streptococcus pyogenes serotype M18 (strain MGAS8232) protein is Holliday junction branch migration complex subunit RuvB.